The primary structure comprises 213 residues: Putative 3-methyladenine DNA glycosylase (213 aa).

It belongs to the DNA glycosylase MPG family.

In Latilactobacillus sakei subsp. sakei (strain 23K) (Lactobacillus sakei subsp. sakei), this protein is Putative 3-methyladenine DNA glycosylase.